The primary structure comprises 312 residues: Olfactory receptor 2T8 (312 aa).

Residues 1–26 lie on the Extracellular side of the membrane; it reads MENGSYTSYFILLGLFNHTRAHQVLF. 2 N-linked (GlcNAc...) asparagine glycosylation sites follow: Asn3 and Asn17. Residues 27–47 form a helical membrane-spanning segment; it reads MMVLSIVLTSLFGNSLMILLI. At 48–55 the chain is on the cytoplasmic side; it reads HWDHRLHT. Residues 56 to 76 form a helical membrane-spanning segment; that stretch reads PMYFLLSQLSLMDVMLVSTTV. At 77 to 96 the chain is on the extracellular side; sequence PKMAADYLTGSKAISRAGCG. A disulfide bridge connects residues Cys95 and Cys177. The helical transmembrane segment at 97–117 threads the bilayer; sequence AQIFFLPTLGGGECFLLAAMA. Residues 118 to 143 are Cytoplasmic-facing; it reads YDRYAAVCHPLRYPTLMSWQLCLRMN. The chain crosses the membrane as a helical span at residues 144–164; that stretch reads LSCWLLGAADGLLQAVATLSF. Over 165–201 the chain is Extracellular; that stretch reads PYCGAHEIDHFFCETPVLVRLACADTSVFENAMYICC. The chain crosses the membrane as a helical span at residues 202-222; it reads VLMLLVPFSLILSSYGLILAA. The Cytoplasmic portion of the chain corresponds to 223 to 234; the sequence is VLHMRSTEARKK. A helical membrane pass occupies residues 235–255; it reads AFATCSSHVAVVGLFYGAAIF. Over 256–269 the chain is Extracellular; that stretch reads TYMRPKSHRSTNHD. Residues 270 to 290 traverse the membrane as a helical segment; the sequence is KVVSAFYTMFTPLLNPLIYSV. Residues 291-312 are Cytoplasmic-facing; the sequence is KNSEVKGALTRCMGRCVALSRE.

This sequence belongs to the G-protein coupled receptor 1 family.

It is found in the cell membrane. Its function is as follows. Odorant receptor. The chain is Olfactory receptor 2T8 (OR2T8) from Homo sapiens (Human).